The following is a 347-amino-acid chain: NADH-ubiquinone oxidoreductase chain 2 (347 aa).

11 helical membrane passes run 2–22 (SPYVLTIMSFSLLLGTTMTLI), 25–45 (HWLTAWMGLEINTLAIIPLMT), 56–76 (AIKYFMIQATASMIILFSAIF), 96–116 (FMMTIALAMKLGLAPFHFWVP), 122–142 (IPLLSGMLLLTWQKIAPISIF), 149–169 (LNMSLLMILSITSTLLGGWGG), 178–197 (ILAYSSIAHMGWMAIIIMIY), 202–219 (ILNLILYLASTITMFMVL), 241–261 (MIIITLTLLSLGGLPPLTGFM), 278–298 (LAMMLALSTLLNLFFYMRIIY), and 326–346 (IPTLTIISSLLLPMTPVFITL).

The protein belongs to the complex I subunit 2 family.

The protein resides in the mitochondrion inner membrane. The enzyme catalyses a ubiquinone + NADH + 5 H(+)(in) = a ubiquinol + NAD(+) + 4 H(+)(out). In terms of biological role, core subunit of the mitochondrial membrane respiratory chain NADH dehydrogenase (Complex I) that is believed to belong to the minimal assembly required for catalysis. Complex I functions in the transfer of electrons from NADH to the respiratory chain. The immediate electron acceptor for the enzyme is believed to be ubiquinone. This Didelphis virginiana (North American opossum) protein is NADH-ubiquinone oxidoreductase chain 2 (MT-ND2).